The sequence spans 102 residues: RNA-binding protein Hfq (102 aa).

The Sm domain maps to 9–68; it reads DPFLNALRRERVPVSIYLVNGIKLQGQIESFDQFVILLKNTVSQMVYKHAISTVVPSRPV. The interval 63-102 is disordered; sequence VPSRPVSHHSNNAGGSTSSNYHHGSSAQNTSAQQDSEENE. Polar residues predominate over residues 70–96; it reads HHSNNAGGSTSSNYHHGSSAQNTSAQQ.

Belongs to the Hfq family. Homohexamer.

In terms of biological role, RNA chaperone that binds small regulatory RNA (sRNAs) and mRNAs to facilitate mRNA translational regulation in response to envelope stress, environmental stress and changes in metabolite concentrations. Also binds with high specificity to tRNAs. This chain is RNA-binding protein Hfq, found in Escherichia coli O17:K52:H18 (strain UMN026 / ExPEC).